Reading from the N-terminus, the 200-residue chain is Recombination protein RecR (200 aa).

A C4-type zinc finger spans residues 59–74 (CEICGNIDTRSPCTVC). The region spanning 82-177 (SIIVVVADVA…KVTRLAHGVP (96 aa)) is the Toprim domain.

This sequence belongs to the RecR family.

May play a role in DNA repair. It seems to be involved in an RecBC-independent recombinational process of DNA repair. It may act with RecF and RecO. The protein is Recombination protein RecR of Nitrobacter hamburgensis (strain DSM 10229 / NCIMB 13809 / X14).